The chain runs to 652 residues: MPDVIRITFPDGAEKEFPKGTTTEDIAASISPGLKKKAIAGKLNGRFVDLRTPLHEDGELVIITQDMPEALDILRHSTAHLMAQAIKRLYGNVKLGVGPVIENGFYYDIDMEHKLTPDDLPKIEAEMRKIVKENLDIVRKEVSREEAIRLYEEIGDELKLELIADIPEGEPISIYEQGEFFDLCRGVHVPSTGKIKEFKLLSISGAYWRGDSNNKMLQRIYGTAFFKKEDLDRYLRLLEEAKERDHRKLGKELELFTTSQQVGQGLPLWLPKGATIRRIIERYIVDKEVALGYDHVYTPVLGSVELYKTSGHWDHYKENMFPPMEMDNEELVLRPMNCPHHMMIYKSKLHSYRELPIRIAELGTMHRYEMSGALTGLQRVRGMTLNDAHIFVRPDQIKDEFKRVVNLILEVYKDFGIEEYSFRLSYRDPHDKEKYYDDDEMWEKAQRMLREAMDELGLDYYEAEGEAAFYGPKLDVQVRTALGKDETLSTVQLDFLLPERFDLTYIGEDGKPHRPVVIHRGVVSTMERFVAFLIEEYKGAFPTWLAPVQVKVIPVSPEAHLDYAYDVQRTLKERGFRVEVDERDEKIGYKIREAQMQKIPYMLVVGDKEVSERAVNVRRYGEKESRTMGLDEFMALLADDVREKRTRLGKAQ.

Residues 1–64 form the TGS domain; the sequence is MPDVIRITFP…HEDGELVIIT (64 aa). Residues 245-542 are catalytic; sequence DHRKLGKELE…LIEEYKGAFP (298 aa). Residues C338, H389, and H519 each coordinate Zn(2+).

The protein belongs to the class-II aminoacyl-tRNA synthetase family. Homodimer. The cofactor is Zn(2+).

The protein localises to the cytoplasm. It carries out the reaction tRNA(Thr) + L-threonine + ATP = L-threonyl-tRNA(Thr) + AMP + diphosphate + H(+). In terms of biological role, catalyzes the attachment of threonine to tRNA(Thr) in a two-step reaction: L-threonine is first activated by ATP to form Thr-AMP and then transferred to the acceptor end of tRNA(Thr). Also edits incorrectly charged L-seryl-tRNA(Thr). The chain is Threonine--tRNA ligase from Geobacillus kaustophilus (strain HTA426).